Consider the following 92-residue polypeptide: Large ribosomal subunit protein bL25 (92 aa).

This sequence belongs to the bacterial ribosomal protein bL25 family. In terms of assembly, part of the 50S ribosomal subunit; part of the 5S rRNA/L5/L18/L25 subcomplex. Contacts the 5S rRNA. Binds to the 5S rRNA independently of L5 and L18.

In terms of biological role, this is one of the proteins that binds to the 5S RNA in the ribosome where it forms part of the central protuberance. This Vibrio parahaemolyticus serotype O3:K6 (strain RIMD 2210633) protein is Large ribosomal subunit protein bL25.